Reading from the N-terminus, the 266-residue chain is UPF0294 protein YafD (266 aa).

This sequence belongs to the UPF0294 family.

It localises to the cytoplasm. The protein is UPF0294 protein YafD (yafD) of Escherichia coli O157:H7.